We begin with the raw amino-acid sequence, 276 residues long: Tryptase beta-2 (276 aa).

An N-terminal signal peptide occupies residues 1 to 21 (MLKRRLLLLWALSLLASLVYS). A propeptide spans 22–31 (APRPANQRVG) (activation peptide). Residues 32-273 (IVGGHEASES…YLDWIHRYVP (242 aa)) form the Peptidase S1 domain. A disulfide bridge connects residues Cys-60 and Cys-76. His-75 serves as the catalytic Charge relay system. Position 98 is a phosphotyrosine (Tyr-98). Asp-122 (charge relay system) is an active-site residue. N-linked (GlcNAc...) asparagine glycosylation occurs at Asn-133. Intrachain disulfides connect Cys-156–Cys-231, Cys-189–Cys-212, and Cys-221–Cys-249. Ser-225 serves as the catalytic Charge relay system.

Belongs to the peptidase S1 family. Tryptase subfamily. Homotetramer. The active tetramer is converted to inactive monomers at neutral and acidic pH in the absence of heparin. Low concentrations of inactive monomers become active monomers at pH 6.0 in the presence of heparin. When the concentration of active monomers is higher, they convert to active monomers and then to active tetramers. These monomers are active and functionally distinct from the tetrameric enzyme. In contrast to the hidden active sites in the tetrameric form, the active site of the monomeric form is accessible for macromolecular proteins and inhibitors, e.g. fibrinogen which is a substrate for the monomeric but not for the tetrameric form. The monomeric form forms a complex with SERPINB6. As to expression, during embryogenesis, detected primarily in skin.

The protein localises to the secreted. The catalysed reaction is Preferential cleavage: Arg-|-Xaa, Lys-|-Xaa, but with more restricted specificity than trypsin.. In terms of biological role, tryptase is the major neutral protease present in mast cells and is secreted upon the coupled activation-degranulation response of this cell type. Plays a role in innate immunity. The chain is Tryptase beta-2 (Tpsb2) from Mus musculus (Mouse).